A 643-amino-acid polypeptide reads, in one-letter code: Phosphomethylpyrimidine synthase (643 aa).

Residues Asn248, Met277, Tyr306, His342, 362–364 (SRG), 403–406 (DGLR), and Glu442 contribute to the substrate site. A Zn(2+)-binding site is contributed by His446. Tyr469 is a binding site for substrate. His510 serves as a coordination point for Zn(2+). Positions 590, 593, and 598 each coordinate [4Fe-4S] cluster.

Belongs to the ThiC family. Homodimer. Requires [4Fe-4S] cluster as cofactor.

The catalysed reaction is 5-amino-1-(5-phospho-beta-D-ribosyl)imidazole + S-adenosyl-L-methionine = 4-amino-2-methyl-5-(phosphooxymethyl)pyrimidine + CO + 5'-deoxyadenosine + formate + L-methionine + 3 H(+). Its pathway is cofactor biosynthesis; thiamine diphosphate biosynthesis. Catalyzes the synthesis of the hydroxymethylpyrimidine phosphate (HMP-P) moiety of thiamine from aminoimidazole ribotide (AIR) in a radical S-adenosyl-L-methionine (SAM)-dependent reaction. The protein is Phosphomethylpyrimidine synthase of Burkholderia mallei (strain NCTC 10247).